The primary structure comprises 156 residues: Sensor histidine kinase component HK2 (156 aa).

The Extracellular segment spans residues 1–42 (MALVLAAAGAVTVVQFRDAAHEADPDGALRGLTDDITADLVR). The chain crosses the membrane as a helical span at residues 43–63 (ELVTILPIVLVIAAVAAYLLS). Residues 64-120 (RAALRPVDRIRAAAQTLTTTPHPDTDAPLPVPPTDDEIAWLATTLNTMLTRLQRALA) enclose the HAMP domain. The Cytoplasmic segment spans residues 64–156 (RAALRPVDRI…RCAGPDPPTS (93 aa)). Residues 128 to 156 (DASHELRTPLALLTTELELRCAGPDPPTS) enclose the Histidine kinase; first part domain. His-131 carries the phosphohistidine; by autocatalysis modification.

Homodimer. Each monomer interacts with HK1 and the receiver domain of TcrA. In terms of processing, phosphorylated by HK1.

The protein localises to the cell membrane. The enzyme catalyses ATP + protein L-histidine = ADP + protein N-phospho-L-histidine.. In terms of biological role, member of the three-protein two-component system HK1/HK2/TcrA. HK2 transfers its phosphoryl group to TcrA. The chain is Sensor histidine kinase component HK2 from Mycobacterium tuberculosis (strain ATCC 25618 / H37Rv).